The following is a 123-amino-acid chain: Small ribosomal subunit protein cS23 (123 aa).

The protein belongs to the chloroplast-specific ribosomal protein cS23 family. Part of the 30S ribosomal subunit.

Its subcellular location is the plastid. It localises to the chloroplast. Probably a ribosomal protein or a ribosome-associated protein. The chain is Small ribosomal subunit protein cS23 (ycf65) from Mesostigma viride (Green alga).